A 334-amino-acid polypeptide reads, in one-letter code: Adenosine deaminase (334 aa).

Zn(2+) is bound by residues His12 and His14. Residues His14, Asp16, and Gly170 each contribute to the substrate site. His197 is a binding site for Zn(2+). Glu200 serves as the catalytic Proton donor. Asp278 lines the Zn(2+) pocket. Asp279 serves as a coordination point for substrate.

This sequence belongs to the metallo-dependent hydrolases superfamily. Adenosine and AMP deaminases family. Adenosine deaminase subfamily. Requires Zn(2+) as cofactor.

The enzyme catalyses adenosine + H2O + H(+) = inosine + NH4(+). It catalyses the reaction 2'-deoxyadenosine + H2O + H(+) = 2'-deoxyinosine + NH4(+). Its function is as follows. Catalyzes the hydrolytic deamination of adenosine and 2-deoxyadenosine. The sequence is that of Adenosine deaminase from Yersinia pseudotuberculosis serotype IB (strain PB1/+).